Reading from the N-terminus, the 352-residue chain is Photosystem II D2 protein (352 aa).

Threonine 2 carries the post-translational modification N-acetylthreonine. Phosphothreonine is present on threonine 2. A helical transmembrane segment spans residues 40–60 (TAYLALGGWLTGTTFVTSWYT). Residue histidine 117 coordinates chlorophyll a. The chain crosses the membrane as a helical span at residues 124-140 (GFMLRQFEIARSVKLRP). Pheophytin a contacts are provided by glutamine 129 and asparagine 142. A helical membrane pass occupies residues 152–165 (VFVSVFLIYPLGQS). Histidine 197 lines the chlorophyll a pocket. The chain crosses the membrane as a helical span at residues 207–227 (AALLCAIHGATVENTLFEDGD). 2 residues coordinate a plastoquinone: histidine 214 and phenylalanine 261. Residue histidine 214 coordinates Fe cation. Histidine 268 contributes to the Fe cation binding site. Residues 278–294 (GLWMSALGVVGLALNLR) form a helical membrane-spanning segment.

The protein belongs to the reaction center PufL/M/PsbA/D family. In terms of assembly, PSII is composed of 1 copy each of membrane proteins PsbA, PsbB, PsbC, PsbD, PsbE, PsbF, PsbH, PsbI, PsbJ, PsbK, PsbL, PsbM, PsbT, PsbX, PsbY, PsbZ, Psb30/Ycf12, at least 3 peripheral proteins of the oxygen-evolving complex and a large number of cofactors. It forms dimeric complexes. Requires The D1/D2 heterodimer binds P680, chlorophylls that are the primary electron donor of PSII, and subsequent electron acceptors. It shares a non-heme iron and each subunit binds pheophytin, quinone, additional chlorophylls, carotenoids and lipids. There is also a Cl(-1) ion associated with D1 and D2, which is required for oxygen evolution. The PSII complex binds additional chlorophylls, carotenoids and specific lipids. as cofactor.

It is found in the plastid. The protein resides in the chloroplast thylakoid membrane. The enzyme catalyses 2 a plastoquinone + 4 hnu + 2 H2O = 2 a plastoquinol + O2. Photosystem II (PSII) is a light-driven water:plastoquinone oxidoreductase that uses light energy to abstract electrons from H(2)O, generating O(2) and a proton gradient subsequently used for ATP formation. It consists of a core antenna complex that captures photons, and an electron transfer chain that converts photonic excitation into a charge separation. The D1/D2 (PsbA/PsbD) reaction center heterodimer binds P680, the primary electron donor of PSII as well as several subsequent electron acceptors. D2 is needed for assembly of a stable PSII complex. The polypeptide is Photosystem II D2 protein (Pleurastrum terricola (Filamentous green alga)).